The sequence spans 171 residues: S-ribosylhomocysteine lyase (171 aa).

Residues His54, His58, and Cys128 each contribute to the Fe cation site.

The protein belongs to the LuxS family. In terms of assembly, homodimer. The cofactor is Fe cation.

The catalysed reaction is S-(5-deoxy-D-ribos-5-yl)-L-homocysteine = (S)-4,5-dihydroxypentane-2,3-dione + L-homocysteine. Functionally, involved in the synthesis of autoinducer 2 (AI-2) which is secreted by bacteria and is used to communicate both the cell density and the metabolic potential of the environment. The regulation of gene expression in response to changes in cell density is called quorum sensing. Catalyzes the transformation of S-ribosylhomocysteine (RHC) to homocysteine (HC) and 4,5-dihydroxy-2,3-pentadione (DPD). This Enterobacter sp. (strain 638) protein is S-ribosylhomocysteine lyase.